A 384-amino-acid chain; its full sequence is 8-amino-7-oxononanoate synthase (384 aa).

A substrate-binding site is contributed by arginine 21. 108-109 is a pyridoxal 5'-phosphate binding site; the sequence is GF. Substrate is bound at residue histidine 133. Pyridoxal 5'-phosphate contacts are provided by serine 179, histidine 207, and threonine 233. The residue at position 236 (lysine 236) is an N6-(pyridoxal phosphate)lysine. Position 352 (threonine 352) interacts with substrate.

Belongs to the class-II pyridoxal-phosphate-dependent aminotransferase family. BioF subfamily. Homodimer. The cofactor is pyridoxal 5'-phosphate.

It carries out the reaction 6-carboxyhexanoyl-[ACP] + L-alanine + H(+) = (8S)-8-amino-7-oxononanoate + holo-[ACP] + CO2. It functions in the pathway cofactor biosynthesis; biotin biosynthesis. Functionally, catalyzes the decarboxylative condensation of pimeloyl-[acyl-carrier protein] and L-alanine to produce 8-amino-7-oxononanoate (AON), [acyl-carrier protein], and carbon dioxide. This Shigella dysenteriae serotype 1 (strain Sd197) protein is 8-amino-7-oxononanoate synthase.